A 290-amino-acid polypeptide reads, in one-letter code: ATP synthase gamma chain (290 aa).

It belongs to the ATPase gamma chain family. F-type ATPases have 2 components, CF(1) - the catalytic core - and CF(0) - the membrane proton channel. CF(1) has five subunits: alpha(3), beta(3), gamma(1), delta(1), epsilon(1). CF(0) has three main subunits: a, b and c.

The protein resides in the cell membrane. In terms of biological role, produces ATP from ADP in the presence of a proton gradient across the membrane. The gamma chain is believed to be important in regulating ATPase activity and the flow of protons through the CF(0) complex. This Wolbachia pipientis subsp. Culex pipiens (strain wPip) protein is ATP synthase gamma chain.